The primary structure comprises 264 residues: S-adenosylmethionine decarboxylase proenzyme (264 aa).

The active-site Schiff-base intermediate with substrate; via pyruvic acid is serine 112. Serine 112 carries the post-translational modification Pyruvic acid (Ser); by autocatalysis. The Proton acceptor; for processing activity role is filled by histidine 117. Cysteine 140 serves as the catalytic Proton donor; for catalytic activity.

It belongs to the prokaryotic AdoMetDC family. Type 2 subfamily. As to quaternary structure, heterooctamer of four alpha and four beta chains arranged as a tetramer of alpha/beta heterodimers. Requires pyruvate as cofactor. Is synthesized initially as an inactive proenzyme. Formation of the active enzyme involves a self-maturation process in which the active site pyruvoyl group is generated from an internal serine residue via an autocatalytic post-translational modification. Two non-identical subunits are generated from the proenzyme in this reaction, and the pyruvate is formed at the N-terminus of the alpha chain, which is derived from the carboxyl end of the proenzyme. The post-translation cleavage follows an unusual pathway, termed non-hydrolytic serinolysis, in which the side chain hydroxyl group of the serine supplies its oxygen atom to form the C-terminus of the beta chain, while the remainder of the serine residue undergoes an oxidative deamination to produce ammonia and the pyruvoyl group blocking the N-terminus of the alpha chain.

It catalyses the reaction S-adenosyl-L-methionine + H(+) = S-adenosyl 3-(methylsulfanyl)propylamine + CO2. Its pathway is amine and polyamine biosynthesis; S-adenosylmethioninamine biosynthesis; S-adenosylmethioninamine from S-adenosyl-L-methionine: step 1/1. In terms of biological role, catalyzes the decarboxylation of S-adenosylmethionine to S-adenosylmethioninamine (dcAdoMet), the propylamine donor required for the synthesis of the polyamines spermine and spermidine from the diamine putrescine. The protein is S-adenosylmethionine decarboxylase proenzyme of Enterobacter sp. (strain 638).